The following is a 221-amino-acid chain: Guanylate kinase (221 aa).

The region spanning 20 to 199 (GLMFILSSPS…CFGKVREILA (180 aa)) is the Guanylate kinase-like domain. An ATP-binding site is contributed by 27-34 (SPSGAGKT).

This sequence belongs to the guanylate kinase family.

Its subcellular location is the cytoplasm. It carries out the reaction GMP + ATP = GDP + ADP. Functionally, essential for recycling GMP and indirectly, cGMP. The chain is Guanylate kinase from Novosphingobium aromaticivorans (strain ATCC 700278 / DSM 12444 / CCUG 56034 / CIP 105152 / NBRC 16084 / F199).